The sequence spans 225 residues: tRNA (guanine-N(1)-)-methyltransferase (225 aa).

S-adenosyl-L-methionine-binding positions include Gly-112 and Ile-132–Leu-137.

Belongs to the RNA methyltransferase TrmD family. Homodimer.

The protein localises to the cytoplasm. It carries out the reaction guanosine(37) in tRNA + S-adenosyl-L-methionine = N(1)-methylguanosine(37) in tRNA + S-adenosyl-L-homocysteine + H(+). Functionally, specifically methylates guanosine-37 in various tRNAs. The protein is tRNA (guanine-N(1)-)-methyltransferase of Flavobacterium psychrophilum (strain ATCC 49511 / DSM 21280 / CIP 103535 / JIP02/86).